The following is an 872-amino-acid chain: Protein SEY1 (872 aa).

The Cytoplasmic portion of the chain corresponds to 1 to 749 (MVANGHFAGV…KRSAIGGITQ (749 aa)). Residues 49–307 (GFNYHLISVF…IPADGFAVYA (259 aa)) form the GB1/RHD3-type G domain. 59-66 (GSQSTGKS) provides a ligand contact to GTP. A coiled-coil region spans residues 482–504 (SNYQQELSLYQKDLENIGGQLRR). Residues 676–704 (LDKWIGHTPSSATPADEEDLTPIGGVDED) form a disordered region. Over residues 690–704 (ADEEDLTPIGGVDED) the composition is skewed to acidic residues. Residues 750–770 (VPLYFYGLLLALGWNEIVAVL) form a helical membrane-spanning segment. The Lumenal segment spans residues 771-773 (RNP). The chain crosses the membrane as a helical span at residues 774–794 (AYFLLLFVCAVTAYVTYQLNL). Residues 795–872 (WGPIIKMTEA…IDDADDDDDF (78 aa)) lie on the Cytoplasmic side of the membrane. The segment at 849-872 (NRKSAGGFQNNRSHIDDADDDDDF) is disordered.

This sequence belongs to the TRAFAC class dynamin-like GTPase superfamily. GB1/RHD3 GTPase family. RHD3 subfamily.

Its subcellular location is the endoplasmic reticulum membrane. Cooperates with the reticulon proteins and tubule-shaping DP1 family proteins to generate and maintain the structure of the tubular endoplasmic reticulum network. Has GTPase activity, which is required for its function in ER organization. The protein is Protein SEY1 of Paracoccidioides brasiliensis (strain Pb18).